Here is a 2177-residue protein sequence, read N- to C-terminus: MEEILRKLQKEASGSKYKAIKESCTWALETLGGLDTIVKIPPHVLREKCLLPLQLALESKNVKLAQHALAGMQKLLSEERFVSMETDSDEKQLLNQILNAVKVTPSLNEDLQVEVMKVLLCITYTPTFDLNGSAVLKIAEVCIETYISSCHQRSINTAVRATLSQMLSDLTLQLRQRQENTIIENPDVPQDFGNQGSTVESLCDDVVSVLTVLCEKLQAAINDSQQLQLLYLECILSVLSSSSSSMHLHRRFTDLIWKNLCPALIVILGNPIHDKTITSAHTSSTSTSLESDSASPGVSDHGRGSGCSCTAPALSGPVARTIYYIAAELVRLVGSVDSMKPVLQSLYHRVLLYPPPQHRVEAIKIMKEILGSPQRLCDLAGPSSTESESRKRSISKRKSHLDLLKLIMDGMTEACIKGGIEACYAAVSCVCTLLGALDELSQGKGLSEGQVQLLLLRLEELKDGAEWSRDSMEINEADFRWQRRVLSSEHTPWESGNERSLDISISVTTDTGQTTLEGELGQTTPEDHSGNHKNSLKSPAIPEGKETLSKVLETEAVDQPDVVQRSHTVPYPDITNFLSVDCRTRSYGSRYSESNFSVDDQDLSRTEFDSCDQYSMAAEKDSGRSDVSDIGSDNCSLADEEQTPRDCLGHRSLRTAALSLKLLKNQEADQHSARLFIQSLEGLLPRLLSLSNVEEVDTALQNFASTFCSGMMHSPGFDGNSSLSFQMLMNADSLYTAAHCALLLNLKLSHGDYYRKRPTLAPGVMKDFMKQVQTSGVLMVFSQAWIEELYHQVLDRNMLGEAGYWGSPEDNSLPLITMLTDIDGLESSAIGGQLMASAATESPFAQSRRIDDSTVAGVAFARYILVGCWKNLIDTLSTPLTGRMAGSSKGLAFILGAEGIKEQNQKERDAICMSLDGLRKAARLSCALGVAANCASALAQMAAASCVQEEKEEREAQEPSDAITQVKLKVEQKLEQIGKVQGVWLHTAHVLCMEAILSVGLEMGSHNPDCWPHVFRVCEYVGTLEHNHFSDGASQPPLTISQPQKATGSAGLLGDPECEGSPPEHSPEQGRSLSTAPVVQPLSIQDLVREGSRGRASDFRGGSLMSGSSAAKVVLTLSTQADRLFEDATDKLNLMALGGFLYQLKKASQSQLFHSVTDTVDYSLAMPGEVKSTQDRKSALHLFRLGNAMLRIVRSKARPLLHVMRCWSLVAPHLVEAACHKERHVSQKAVSFIHDILTEVLTDWNEPPHFHFNEALFRPFERIMQLELCDEDVQDQVVTSIGELVEVCSTQIQSGWRPLFSALETVHGGNKSEMKEYLVGDYSMGKGQAPVFDVFEAFLNTDNIQVFANAATSYIMCLMKFVKGLGEVDCKEIGDCAPAPGAPSTDLCLPALDYLRRCSQLLAKIYKMPLKPIFLSGRLAGLPRRLQEQSASSEDGIESVLSDFDDDTGLIEVWIILLEQLTAAVSNCPRQHQPPTLDLLFELLRDVTKTPGPGFGIYAVVHLLLPVMSVWLRRSHKDHSYWDMASANFKHAIGLSCELVVEHIQSFLHSDIRYESMINTMLKDLFELLVACVAKPTETISRVGCSCIRYVLVTAGPVFTEEMWRLACCALQDAFSATLKPVKDLLGCFHSGTESFSGEGCQVRVAAPSSSPSAEAEYWRIRAMAQQVFMLDTQCSPKTPNNFDHAQSCQLIIELPPDEKPNGHTKKSVSFREIVVSLLSHQVLLQNLYDILLEEFVKGPSPGEEKTIQVPEAKLAGFLRYISMQNLAVIFDLLLDSYRTAREFDTSPGLKCLLKKVSGIGGAANLYRQSAMSFNIYFHALVCAVLTNQETITAEQVKKVLFEDDERSTDSSQQCSSEDEDIFEETAQVSPPRGKEKRQWRARMPLLSVQPVSNADWVWLVKRLHKLCMELCNNYIQMHLDLENCMEEPPIFKGDPFFILPSFQSESSTPSTGGFSGKETPSEDDRSQSREHMGESLSLKAGGGDLLLPPSPKVEKKDPSRKKEWWENAGNKIYTMAADKTISKLMTEYKKRKQQHNLSAFPKEVKVEKKGEPLGPRGQDSPLLQRPQHLMDQGQMRHSFSAGPELLRQDKRPRSGSTGSSLSVSVRDAEAQIQAWTNMVLTVLNQIQILPDQTFTALQPAVFPCISQLTCHVTDIRVRQAVREWLGRVGRVYDIIV.

Low complexity predominate over residues T282 to S295. The interval T282 to H301 is disordered. S471 carries the post-translational modification Phosphoserine. The span at T511–T524 shows a compositional bias: polar residues. Disordered regions lie at residues T511–P542, A617–S636, and D1031–A1076. One can recognise an SEC7 domain in the interval R583 to R796. Positions A618–V627 are enriched in basic and acidic residues. S632 and S636 each carry phosphoserine. Residues G1032–T1047 show a composition bias toward polar residues. A Phosphoserine modification is found at S1049. A helical membrane pass occupies residues G1492–L1512. Disordered stretches follow at residues S1848–K1877, E1946–E2004, and K2033–L2064. Residues T1960–G1974 show a composition bias toward basic and acidic residues. Phosphoserine is present on S1991. Basic and acidic residues-rich tracts occupy residues K1993–E2004 and K2043–E2052. 5 positions are modified to phosphoserine: S2079, S2081, S2095, S2101, and S2103. The tract at residues A2082–S2103 is disordered.

As to quaternary structure, interacts with PHB2. As to expression, expressed in breast cancer cell lines. Not expressed in normal tissues such as duct, mammary gland, lung, heart, liver, kidnay, bone marrow.

It is found in the cytoplasm. Its subcellular location is the cytoplasmic vesicle. It localises to the secretory vesicle. The protein resides in the secretory vesicle membrane. Functionally, participates in the regulation of systemic glucose homeostasis, where it negatively regulates insulin granule biogenesis in pancreatic islet beta cells. Also regulates glucagon granule production in pancreatic alpha cells. Inhibits nuclear translocation of the transcriptional coregulator PHB2 and may enhance estrogen receptor alpha (ESR1) transcriptional activity in breast cancer cells. The polypeptide is Brefeldin A-inhibited guanine nucleotide-exchange protein 3 (Homo sapiens (Human)).